Reading from the N-terminus, the 152-residue chain is 3-hydroxyacyl-[acyl-carrier-protein] dehydratase FabZ (152 aa).

The active site involves H54.

The protein belongs to the thioester dehydratase family. FabZ subfamily.

It is found in the cytoplasm. It catalyses the reaction a (3R)-hydroxyacyl-[ACP] = a (2E)-enoyl-[ACP] + H2O. Functionally, involved in unsaturated fatty acids biosynthesis. Catalyzes the dehydration of short chain beta-hydroxyacyl-ACPs and long chain saturated and unsaturated beta-hydroxyacyl-ACPs. In Shewanella woodyi (strain ATCC 51908 / MS32), this protein is 3-hydroxyacyl-[acyl-carrier-protein] dehydratase FabZ.